The primary structure comprises 311 residues: Formimidoylglutamase (311 aa).

Positions 130, 155, 157, 159, 242, and 244 each coordinate Mn(2+).

The protein belongs to the arginase family. It depends on Mn(2+) as a cofactor.

It catalyses the reaction N-formimidoyl-L-glutamate + H2O = formamide + L-glutamate. Its pathway is amino-acid degradation; L-histidine degradation into L-glutamate; L-glutamate from N-formimidoyl-L-glutamate (hydrolase route): step 1/1. Its function is as follows. Catalyzes the conversion of N-formimidoyl-L-glutamate to L-glutamate and formamide. This is Formimidoylglutamase from Staphylococcus aureus (strain MSSA476).